The primary structure comprises 332 residues: Terpene synthase 1 (332 aa).

The DDxx(x)D/E motif signature appears at 81–86; it reads DDGLDA. An NDxxSxxxD/E motif motif is present at residues 221-229; that stretch reads NDLVSYEKE.

Belongs to the terpene synthase family.

The enzyme catalyses (2E,6E)-farnesyl diphosphate = (2S,3R,6S,9S)-(-)-protoillud-7-ene + diphosphate. Terpene synthase that converts its substrate farnesyl diphosphate (FPP) into the sesquiterpene protoillud-7-ene. This is Terpene synthase 1 from Acytostelium subglobosum (Slime mold).